Here is a 204-residue protein sequence, read N- to C-terminus: Octanoyltransferase (204 aa).

In terms of domain architecture, BPL/LPL catalytic spans 30-204 (CETPDEIWLL…QSFINQLTDV (175 aa)). Residues 69–76 (RGGQITYH), 136–138 (SLG), and 149–151 (GIA) contribute to the substrate site. Cys167 (acyl-thioester intermediate) is an active-site residue.

It belongs to the LipB family.

Its subcellular location is the cytoplasm. It catalyses the reaction octanoyl-[ACP] + L-lysyl-[protein] = N(6)-octanoyl-L-lysyl-[protein] + holo-[ACP] + H(+). It participates in protein modification; protein lipoylation via endogenous pathway; protein N(6)-(lipoyl)lysine from octanoyl-[acyl-carrier-protein]: step 1/2. Catalyzes the transfer of endogenously produced octanoic acid from octanoyl-acyl-carrier-protein onto the lipoyl domains of lipoate-dependent enzymes. Lipoyl-ACP can also act as a substrate although octanoyl-ACP is likely to be the physiological substrate. This Nitrosomonas europaea (strain ATCC 19718 / CIP 103999 / KCTC 2705 / NBRC 14298) protein is Octanoyltransferase.